A 479-amino-acid polypeptide reads, in one-letter code: UDP-N-acetylmuramate--L-alanine ligase (479 aa).

Position 126-132 (G126–T132) interacts with ATP.

This sequence belongs to the MurCDEF family.

The protein resides in the cytoplasm. It catalyses the reaction UDP-N-acetyl-alpha-D-muramate + L-alanine + ATP = UDP-N-acetyl-alpha-D-muramoyl-L-alanine + ADP + phosphate + H(+). The protein operates within cell wall biogenesis; peptidoglycan biosynthesis. In terms of biological role, cell wall formation. The polypeptide is UDP-N-acetylmuramate--L-alanine ligase (Alkalilimnicola ehrlichii (strain ATCC BAA-1101 / DSM 17681 / MLHE-1)).